The sequence spans 417 residues: NADH-quinone oxidoreductase subunit D (417 aa).

Belongs to the complex I 49 kDa subunit family. In terms of assembly, NDH-1 is composed of 14 different subunits. Subunits NuoB, C, D, E, F, and G constitute the peripheral sector of the complex.

The protein resides in the cell inner membrane. It carries out the reaction a quinone + NADH + 5 H(+)(in) = a quinol + NAD(+) + 4 H(+)(out). Functionally, NDH-1 shuttles electrons from NADH, via FMN and iron-sulfur (Fe-S) centers, to quinones in the respiratory chain. The immediate electron acceptor for the enzyme in this species is believed to be ubiquinone. Couples the redox reaction to proton translocation (for every two electrons transferred, four hydrogen ions are translocated across the cytoplasmic membrane), and thus conserves the redox energy in a proton gradient. This chain is NADH-quinone oxidoreductase subunit D, found in Cupriavidus metallidurans (strain ATCC 43123 / DSM 2839 / NBRC 102507 / CH34) (Ralstonia metallidurans).